Reading from the N-terminus, the 423-residue chain is Gamma-glutamyl phosphate reductase (423 aa).

Belongs to the gamma-glutamyl phosphate reductase family.

Its subcellular location is the cytoplasm. It carries out the reaction L-glutamate 5-semialdehyde + phosphate + NADP(+) = L-glutamyl 5-phosphate + NADPH + H(+). The protein operates within amino-acid biosynthesis; L-proline biosynthesis; L-glutamate 5-semialdehyde from L-glutamate: step 2/2. Catalyzes the NADPH-dependent reduction of L-glutamate 5-phosphate into L-glutamate 5-semialdehyde and phosphate. The product spontaneously undergoes cyclization to form 1-pyrroline-5-carboxylate. This is Gamma-glutamyl phosphate reductase from Pseudomonas entomophila (strain L48).